Consider the following 213-residue polypeptide: Orotate phosphoribosyltransferase (213 aa).

A 5-phospho-alpha-D-ribose 1-diphosphate-binding site is contributed by Lys-26. 34-35 (FF) serves as a coordination point for orotate. 5-phospho-alpha-D-ribose 1-diphosphate is bound by residues 72-73 (YK), Arg-99, Lys-100, Lys-103, His-105, and 124-132 (DDVITAGTA). The orotate site is built by Thr-128 and Arg-156.

This sequence belongs to the purine/pyrimidine phosphoribosyltransferase family. PyrE subfamily. In terms of assembly, homodimer. The cofactor is Mg(2+).

It carries out the reaction orotidine 5'-phosphate + diphosphate = orotate + 5-phospho-alpha-D-ribose 1-diphosphate. It participates in pyrimidine metabolism; UMP biosynthesis via de novo pathway; UMP from orotate: step 1/2. In terms of biological role, catalyzes the transfer of a ribosyl phosphate group from 5-phosphoribose 1-diphosphate to orotate, leading to the formation of orotidine monophosphate (OMP). The polypeptide is Orotate phosphoribosyltransferase (Haemophilus influenzae (strain 86-028NP)).